A 349-amino-acid polypeptide reads, in one-letter code: Protein O-mannose kinase (349 aa).

Topologically, residues 1 to 19 are cytoplasmic; it reads MGQQHGTRNGLTHRELPRG. Residues 20 to 42 traverse the membrane as a helical; Signal-anchor for type II membrane protein segment; the sequence is VGLLLAMALMNVALYLCLDQLFI. Residues 43–349 are Lumenal-facing; sequence SPGRSTADSR…TVMSQTKEML (307 aa). Asn-66, Asn-164, and Asn-219 each carry an N-linked (GlcNAc...) asparagine glycan. Residues 80 to 349 enclose the Protein kinase domain; it reads VRQLKRVGEG…TVMSQTKEML (270 aa).

The protein belongs to the protein kinase superfamily. Ser/Thr protein kinase family. STKL subfamily.

The protein localises to the endoplasmic reticulum membrane. The enzyme catalyses 3-O-[beta-D-GalNAc-(1-&gt;3)-beta-D-GlcNAc-(1-&gt;4)-alpha-D-Man]-L-Thr-[protein] + ATP = 3-O-[beta-D-GalNAc-(1-&gt;3)-beta-D-GlcNAc-(1-&gt;4)-(O-6-P-alpha-D-Man)]-Thr-[protein] + ADP + H(+). Protein O-mannose kinase that specifically mediates phosphorylation at the 6-position of an O-mannose of the trisaccharide (N-acetylgalactosamine (GalNAc)-beta-1,3-N-acetylglucosamine (GlcNAc)-beta-1,4-mannose) to generate phosphorylated O-mannosyl trisaccharide (N-acetylgalactosamine-beta-1,3-N-acetylglucosamine-beta-1,4-(phosphate-6-)mannose). Phosphorylated O-mannosyl trisaccharide is a carbohydrate structure present in alpha-dystroglycan (DAG1), which is required for binding laminin G-like domain-containing extracellular proteins with high affinity. Only shows kinase activity when the GalNAc-beta-3-GlcNAc-beta-terminus is linked to the 4-position of O-mannose, suggesting that this disaccharide serves as the substrate recognition motif. The sequence is that of Protein O-mannose kinase (Pomk) from Mus musculus (Mouse).